We begin with the raw amino-acid sequence, 860 residues long: Leucine--tRNA ligase (860 aa).

A 'HIGH' region motif is present at residues 42–52 (PYPSGRLHMGH). The short motif at 619 to 623 (KMSKS) is the 'KMSKS' region element. Residue K622 coordinates ATP.

This sequence belongs to the class-I aminoacyl-tRNA synthetase family.

The protein resides in the cytoplasm. The enzyme catalyses tRNA(Leu) + L-leucine + ATP = L-leucyl-tRNA(Leu) + AMP + diphosphate. In Pectobacterium atrosepticum (strain SCRI 1043 / ATCC BAA-672) (Erwinia carotovora subsp. atroseptica), this protein is Leucine--tRNA ligase.